A 1131-amino-acid polypeptide reads, in one-letter code: Phytochrome a (1131 aa).

Residues 1–23 are compositionally biased toward low complexity; it reads MSSSRPAHSSSSSSRTRQSSQAR. A disordered region spans residues 1-26; the sequence is MSSSRPAHSSSSSSRTRQSSQARILA. Residues 219-404 form the GAF domain; sequence SMEALCNTVV…VFAVHVNKEF (186 aa). A phytochromobilin-binding site is contributed by C324. PAS domains are found at residues 620–690 and 750–834; these read VTSE…LQGK and VEGD…LAGE. Positions 904–1124 constitute a Histidine kinase domain; that stretch reads YMRHAINKPL…TFILTAELAA (221 aa).

This sequence belongs to the phytochrome family. In terms of assembly, homodimer. Contains one covalently linked phytochromobilin chromophore.

Its function is as follows. Regulatory photoreceptor which exists in two forms that are reversibly interconvertible by light: the Pr form that absorbs maximally in the red region of the spectrum and the Pfr form that absorbs maximally in the far-red region. Photoconversion of Pr to Pfr induces an array of morphogenic responses, whereas reconversion of Pfr to Pr cancels the induction of those responses. Pfr controls the expression of a number of nuclear genes including those encoding the small subunit of ribulose-bisphosphate carboxylase, chlorophyll A/B binding protein, protochlorophyllide reductase, rRNA, etc. It also controls the expression of its own gene(s) in a negative feedback fashion. In Sorghum bicolor (Sorghum), this protein is Phytochrome a (PHYA).